The sequence spans 93 residues: Putative membrane protein insertion efficiency factor (93 aa).

Residues V72–E93 are disordered. The segment covering P82–E93 has biased composition (basic residues).

Belongs to the UPF0161 family.

The protein resides in the cell membrane. Functionally, could be involved in insertion of integral membrane proteins into the membrane. The polypeptide is Putative membrane protein insertion efficiency factor (Deinococcus geothermalis (strain DSM 11300 / CIP 105573 / AG-3a)).